We begin with the raw amino-acid sequence, 748 residues long: Glucans biosynthesis glucosyltransferase H (748 aa).

7 helical membrane passes run 85 to 107, 127 to 149, 443 to 465, 494 to 516, 529 to 551, 587 to 606, and 608 to 630; these read LIVRRLFIFVGTALLTLAGGYGM, FLVLLAWVAFSFMSALAGFFVLL, GIGSYVTAPLWLLFLLVGLLISL, AWVFAATMGLLILPKLLAYLVLI, GRVLAGVVCEAFVAALLAPCMMI, LAGPTLCGLVLSVCAYSVSL, and LLLWMSPVVLGLLLSIPLGIMTS.

Belongs to the glycosyltransferase 2 family. OpgH subfamily.

The protein localises to the cell inner membrane. The protein operates within glycan metabolism; osmoregulated periplasmic glucan (OPG) biosynthesis. In terms of biological role, involved in the biosynthesis of osmoregulated periplasmic glucans (OPGs). In Bradyrhizobium diazoefficiens (strain JCM 10833 / BCRC 13528 / IAM 13628 / NBRC 14792 / USDA 110), this protein is Glucans biosynthesis glucosyltransferase H.